The primary structure comprises 400 residues: Na(+)/H(+) antiporter NhaA (400 aa).

A run of 12 helical transmembrane segments spans residues 26–46, 71–91, 107–127, 137–157, 166–186, 189–209, 212–232, 233–253, 273–293, 299–319, 340–360, and 373–393; these read AGGILLLFSAVVAMLLANSPL, LIHWINDGFMAVFFVLVGMEV, IFPAIAAIGGMVIPAVVYWFI, GWAIPMATDIAFALGIMALLS, IFLLALAIIDDLGAIVVIALF, HGLSVQALIFSAVAIIALILL, FKVSALCAYMVVGAILWASVL, KSGVHATLAGVIIGFSIPLKG, FVILPLFAFANAGVSFAGIDV, PLLLAIASGLIIGKPVGIFGF, IFAVAVLCGIGFTMSMFLASL, and LSRLGILFGSTVSAILGYLFL.

The protein belongs to the NhaA Na(+)/H(+) (TC 2.A.33) antiporter family.

It localises to the cell inner membrane. The catalysed reaction is Na(+)(in) + 2 H(+)(out) = Na(+)(out) + 2 H(+)(in). Functionally, na(+)/H(+) antiporter that extrudes sodium in exchange for external protons. The sequence is that of Na(+)/H(+) antiporter NhaA from Haemophilus influenzae (strain PittEE).